The chain runs to 131 residues: Ribosome-binding factor A (131 aa).

It belongs to the RbfA family. In terms of assembly, monomer. Binds 30S ribosomal subunits, but not 50S ribosomal subunits or 70S ribosomes.

The protein resides in the cytoplasm. In terms of biological role, one of several proteins that assist in the late maturation steps of the functional core of the 30S ribosomal subunit. Associates with free 30S ribosomal subunits (but not with 30S subunits that are part of 70S ribosomes or polysomes). Required for efficient processing of 16S rRNA. May interact with the 5'-terminal helix region of 16S rRNA. In Ruegeria pomeroyi (strain ATCC 700808 / DSM 15171 / DSS-3) (Silicibacter pomeroyi), this protein is Ribosome-binding factor A.